We begin with the raw amino-acid sequence, 89 residues long: Small ribosomal subunit protein uS15 (89 aa).

Belongs to the universal ribosomal protein uS15 family. Part of the 30S ribosomal subunit. Forms a bridge to the 50S subunit in the 70S ribosome, contacting the 23S rRNA.

In terms of biological role, one of the primary rRNA binding proteins, it binds directly to 16S rRNA where it helps nucleate assembly of the platform of the 30S subunit by binding and bridging several RNA helices of the 16S rRNA. Its function is as follows. Forms an intersubunit bridge (bridge B4) with the 23S rRNA of the 50S subunit in the ribosome. The chain is Small ribosomal subunit protein uS15 from Buchnera aphidicola subsp. Schizaphis graminum (strain Sg).